We begin with the raw amino-acid sequence, 458 residues long: Flavonol 3-O-glucosyltransferase UGT76E12 (458 aa).

The active-site Proton acceptor is the His25. His25 lines the an anthocyanidin pocket. The Charge relay role is filled by Asp118. The UDP-alpha-D-glucose site is built by Thr140, Ala339, Gln341, His356, Trp359, Asn360, Ser361, and Glu364. Gly379 lines the an anthocyanidin pocket. Asp380 and Gln381 together coordinate UDP-alpha-D-glucose.

Belongs to the UDP-glycosyltransferase family.

It carries out the reaction a flavonol + UDP-alpha-D-glucose = a flavonol 3-O-beta-D-glucoside + UDP + H(+). The catalysed reaction is a 7-O-hydroxy-flavonol + UDP-alpha-D-glucose = a flavonol 7-O-beta-D-glucoside + UDP + H(+). In terms of biological role, possesses quercetin 3-O-glucosyltransferase and 7-O-glucosyltransferase activities in vitro. This is Flavonol 3-O-glucosyltransferase UGT76E12 from Arabidopsis thaliana (Mouse-ear cress).